The chain runs to 464 residues: Cysteine--tRNA ligase (464 aa).

C28 is a binding site for Zn(2+). The 'HIGH' region signature appears at 30 to 40; sequence ITAYDFCHIGH. The Zn(2+) site is built by C210, H235, and E239. Residues 267–271 carry the 'KMSKS' region motif; sequence KMSKS. K270 contributes to the ATP binding site.

This sequence belongs to the class-I aminoacyl-tRNA synthetase family. Monomer. The cofactor is Zn(2+).

It localises to the cytoplasm. It catalyses the reaction tRNA(Cys) + L-cysteine + ATP = L-cysteinyl-tRNA(Cys) + AMP + diphosphate. The chain is Cysteine--tRNA ligase from Buchnera aphidicola subsp. Baizongia pistaciae (strain Bp).